Reading from the N-terminus, the 158-residue chain is ATP synthase subunit b' (158 aa).

Residues 24-44 (ATLPLMAVQILVLVFLLNAVF) form a helical membrane-spanning segment.

The protein belongs to the ATPase B chain family. As to quaternary structure, F-type ATPases have 2 components, F(1) - the catalytic core - and F(0) - the membrane proton channel. F(1) has five subunits: alpha(3), beta(3), gamma(1), delta(1), epsilon(1). F(0) has four main subunits: a(1), b(1), b'(1) and c(10-14). The alpha and beta chains form an alternating ring which encloses part of the gamma chain. F(1) is attached to F(0) by a central stalk formed by the gamma and epsilon chains, while a peripheral stalk is formed by the delta, b and b' chains.

The protein localises to the cellular thylakoid membrane. F(1)F(0) ATP synthase produces ATP from ADP in the presence of a proton or sodium gradient. F-type ATPases consist of two structural domains, F(1) containing the extramembraneous catalytic core and F(0) containing the membrane proton channel, linked together by a central stalk and a peripheral stalk. During catalysis, ATP synthesis in the catalytic domain of F(1) is coupled via a rotary mechanism of the central stalk subunits to proton translocation. In terms of biological role, component of the F(0) channel, it forms part of the peripheral stalk, linking F(1) to F(0). The b'-subunit is a diverged and duplicated form of b found in plants and photosynthetic bacteria. In Synechococcus elongatus (strain ATCC 33912 / PCC 7942 / FACHB-805) (Anacystis nidulans R2), this protein is ATP synthase subunit b'.